The following is a 293-amino-acid chain: Neugrin (293 aa).

The N-terminal stretch at 1 to 18 (MALSLSLFLGGRVRTSLA) is a signal peptide. Residue Ser41 is modified to Phosphoserine. Disordered regions lie at residues 177–210 (DEVSSKSQNHSTALKVAKSHPHSTDAQKKREGRD) and 224–254 (TTALGHQRELQKSATSDSEATGRAGSDTLPS). Asn185 carries an N-linked (GlcNAc...) asparagine glycan. A compositionally biased stretch (basic and acidic residues) spans 198 to 210 (HSTDAQKKREGRD).

The protein belongs to the neugrin family. Forms a regulatory protein-RNA complex, consisting of RCC1L, NGRN, RPUSD3, RPUSD4, TRUB2, FASTKD2 and 16S mt-rRNA. Interacts with 16S mt-rRNA; this interaction is direct. In terms of tissue distribution, expressed in heart, brain, liver and kidney. In brain, mainly expressed in neurons rather than glial cells.

It localises to the nucleus. The protein resides in the secreted. The protein localises to the mitochondrion membrane. In terms of biological role, plays an essential role in mitochondrial ribosome biogenesis. As a component of a functional protein-RNA module, consisting of RCC1L, NGRN, RPUSD3, RPUSD4, TRUB2, FASTKD2 and 16S mitochondrial ribosomal RNA (16S mt-rRNA), controls 16S mt-rRNA abundance and is required for intra-mitochondrial translation of core subunits of the oxidative phosphorylation system. The chain is Neugrin (Ngrn) from Mus musculus (Mouse).